A 302-amino-acid chain; its full sequence is Probable E3 ubiquitin-protein ligase RZFP34 (302 aa).

The CHY-type zinc-finger motif lies at 54 to 130 (EGIMQYGCAH…VRQVCISCGV (77 aa)). C61, H63, C74, C75, C81, C84, H85, H100, C112, C115, C125, C128, C137, C140, H153, C154, C157, C160, H170, C171, C174, C177, H186, and C188 together coordinate Zn(2+). The segment at 132–196 (MGKYFCEVCK…ACVEGAMHHD (65 aa)) adopts a CTCHY-type zinc-finger fold. The RING-type; atypical zinc finger occupies 197 to 240 (CPICFEYLFESTNDVSVLPCGHTIHVKCLREMEEHCQFACPLCS).

It is found in the nucleus. It carries out the reaction S-ubiquitinyl-[E2 ubiquitin-conjugating enzyme]-L-cysteine + [acceptor protein]-L-lysine = [E2 ubiquitin-conjugating enzyme]-L-cysteine + N(6)-ubiquitinyl-[acceptor protein]-L-lysine.. Its pathway is protein modification; protein ubiquitination. In terms of biological role, possesses transactivation activity in yeast cells. Involved in the regulation of stomatal aperture. May modulate the expression of genes that control stomata opening during heat shock or drought stress. The protein is Probable E3 ubiquitin-protein ligase RZFP34 of Oryza sativa subsp. japonica (Rice).